Here is a 416-residue protein sequence, read N- to C-terminus: UDP-N-acetylmuramoylalanine--D-glutamate ligase (416 aa).

Gly104 to Thr110 is a binding site for ATP.

This sequence belongs to the MurCDEF family.

Its subcellular location is the cytoplasm. The catalysed reaction is UDP-N-acetyl-alpha-D-muramoyl-L-alanine + D-glutamate + ATP = UDP-N-acetyl-alpha-D-muramoyl-L-alanyl-D-glutamate + ADP + phosphate + H(+). The protein operates within cell wall biogenesis; peptidoglycan biosynthesis. In terms of biological role, cell wall formation. Catalyzes the addition of glutamate to the nucleotide precursor UDP-N-acetylmuramoyl-L-alanine (UMA). This is UDP-N-acetylmuramoylalanine--D-glutamate ligase from Francisella tularensis subsp. tularensis (strain FSC 198).